Consider the following 354-residue polypeptide: Protein Wnt-11 (354 aa).

Positions 1–24 (MKPSPQFLLAAFLSLILQTGICYG) are cleaved as a signal peptide. N-linked (GlcNAc...) asparagine glycosylation is found at Asn-40 and Asn-90. 11 cysteine pairs are disulfide-bonded: Cys-80–Cys-91, Cys-130–Cys-138, Cys-140–Cys-157, Cys-209–Cys-223, Cys-211–Cys-218, Cys-283–Cys-314, Cys-299–Cys-309, Cys-313–Cys-353, Cys-329–Cys-344, Cys-331–Cys-341, and Cys-336–Cys-337. Ser-215 is lipidated: O-palmitoleoyl serine; by PORCN. N-linked (GlcNAc...) asparagine glycosylation is found at Asn-300 and Asn-304.

The protein belongs to the Wnt family. Palmitoleoylation is required for efficient binding to frizzled receptors. Depalmitoleoylation leads to Wnt signaling pathway inhibition.

The protein resides in the secreted. It localises to the extracellular space. The protein localises to the extracellular matrix. In terms of biological role, ligand for members of the frizzled family of seven transmembrane receptors. May play a role in the formation of dermal structure, both limb and feather buds. Is likely to signal over only few cell diameters. In Coturnix japonica (Japanese quail), this protein is Protein Wnt-11 (WNT11).